Reading from the N-terminus, the 548-residue chain is Aspergilol synthase AuAP450 (548 aa).

Residues 38 to 58 (PQLVITTLGALLLAAFYLLPS) form a helical membrane-spanning segment. Cysteine 489 contacts heme.

The protein belongs to the cytochrome P450 family. Heme is required as a cofactor.

It is found in the membrane. The protein operates within secondary metabolite biosynthesis; terpenoid biosynthesis. Its function is as follows. Cytochrome P450 monooxygenase; part of the gene cluster that mediates the biosynthesis of aspergiltriene A, aspergildienes A-D and aspergilols A-D. The bifunctional terpene synthase AuAS converts DMAPP and IPP into sesterterpenes. The C-terminal prenyltransferase (PT) domain of AuAS catalyzes formation of GFPP, whereas the N-terminal terpene cyclase (TC) domain catalyzes the cyclization of GFPP into 5 distinct sesterterpenes: aspergiltriene A, aspergildiene A, aspergildiene B, aspergildiene C and aspergildiene D. The cytochrome P450 monooxygenase AP450 then hydroxylates the aspergildienes A, B, C and D to yield the corresponding sesterterpene alcohols, aspergilols A-D. The polypeptide is Aspergilol synthase AuAP450 (Aspergillus ustus).